The primary structure comprises 37 residues: Large ribosomal subunit protein bL36c (37 aa).

It belongs to the bacterial ribosomal protein bL36 family.

It is found in the plastid. Its subcellular location is the chloroplast. The chain is Large ribosomal subunit protein bL36c from Mesembryanthemum crystallinum (Common ice plant).